The primary structure comprises 858 residues: Low-density lipoprotein receptor-related protein 12 (858 aa).

The signal sequence occupies residues 1 to 32; it reads MARRWSTKESQRRGSAWLLLFLAGVYGNGALA. Residues 33 to 492 lie on the Extracellular side of the membrane; it reads ELSENVHISG…ENCPVIVPTR (460 aa). 9 cysteine pairs are disulfide-bonded: Cys-47–Cys-76, Cys-103–Cys-122, Cys-166–Cys-178, Cys-173–Cys-191, Cys-185–Cys-200, Cys-215–Cys-232, Cys-222–Cys-245, Cys-239–Cys-254, and Cys-259–Cys-285. One can recognise a CUB 1 domain in the interval 47-159; sequence CGESPEQIRA…KGFRLAYFSG (113 aa). A glycan (N-linked (GlcNAc...) asparagine) is linked at Asn-75. LDL-receptor class A domains follow at residues 165–201 and 214–255; these read DCAC…EVCA and PCAY…IDCD. Residues 259 to 372 form the CUB 2 domain; it reads CGQWLKYFYG…RGFNATYQVD (114 aa). Asn-284 and Asn-366 each carry an N-linked (GlcNAc...) asparagine glycan. LDL-receptor class A domains are found at residues 374–411, 412–449, and 450–486; these read FCLP…INCT, MCQK…KNCF, and FCQP…ENCP. Intrachain disulfides connect Cys-375–Cys-388, Cys-382–Cys-401, Cys-395–Cys-410, Cys-413–Cys-426, Cys-420–Cys-439, Cys-433–Cys-448, Cys-451–Cys-463, Cys-458–Cys-476, and Cys-470–Cys-485. N-linked (GlcNAc...) asparagine glycosylation is present at Asn-409. Residue Asn-441 is glycosylated (N-linked (GlcNAc...) asparagine). The helical transmembrane segment at 493 to 513 threads the bilayer; the sequence is VITAAVIGSLICGLLLVIALG. Over 514–858 the chain is Cytoplasmic; that stretch reads CTCKLYSLRM…TSDDEALLLC (345 aa). 2 disordered regions span residues 619–721 and 746–767; these read ALVS…VSPA and SSST…SGRE. The span at 712–721 shows a compositional bias: low complexity; that stretch reads SVEAPSVSPA. A compositionally biased stretch (polar residues) spans 746–755; sequence SSSTTQNRSP.

This sequence belongs to the LDLR family. As to quaternary structure, may interact with RACK1, ZFYVE9 and NMRK2.

It is found in the membrane. The protein resides in the coated pit. In terms of biological role, probable receptor, which may be involved in the internalization of lipophilic molecules and/or signal transduction. May act as a tumor suppressor. In Mus musculus (Mouse), this protein is Low-density lipoprotein receptor-related protein 12 (Lrp12).